Here is a 508-residue protein sequence, read N- to C-terminus: 2,3-bisphosphoglycerate-independent phosphoglycerate mutase (508 aa).

Asp14 and Ser64 together coordinate Mn(2+). The active-site Phosphoserine intermediate is Ser64. Residues His125, 155 to 156, Arg187, Arg193, 259 to 262, and Lys332 each bind substrate; these read RD and RADR. Residues Asp399, His403, Asp440, His441, and His459 each contribute to the Mn(2+) site.

Belongs to the BPG-independent phosphoglycerate mutase family. As to quaternary structure, monomer. It depends on Mn(2+) as a cofactor.

It catalyses the reaction (2R)-2-phosphoglycerate = (2R)-3-phosphoglycerate. It functions in the pathway carbohydrate degradation; glycolysis; pyruvate from D-glyceraldehyde 3-phosphate: step 3/5. Its function is as follows. Catalyzes the interconversion of 2-phosphoglycerate and 3-phosphoglycerate. The chain is 2,3-bisphosphoglycerate-independent phosphoglycerate mutase from Pseudomonas fluorescens (strain Pf0-1).